A 145-amino-acid polypeptide reads, in one-letter code: D-aminoacyl-tRNA deacylase (145 aa).

Positions 137–138 match the Gly-cisPro motif, important for rejection of L-amino acids motif; the sequence is GP.

This sequence belongs to the DTD family. Homodimer.

The protein localises to the cytoplasm. It catalyses the reaction glycyl-tRNA(Ala) + H2O = tRNA(Ala) + glycine + H(+). The catalysed reaction is a D-aminoacyl-tRNA + H2O = a tRNA + a D-alpha-amino acid + H(+). Its function is as follows. An aminoacyl-tRNA editing enzyme that deacylates mischarged D-aminoacyl-tRNAs. Also deacylates mischarged glycyl-tRNA(Ala), protecting cells against glycine mischarging by AlaRS. Acts via tRNA-based rather than protein-based catalysis; rejects L-amino acids rather than detecting D-amino acids in the active site. By recycling D-aminoacyl-tRNA to D-amino acids and free tRNA molecules, this enzyme counteracts the toxicity associated with the formation of D-aminoacyl-tRNA entities in vivo and helps enforce protein L-homochirality. The polypeptide is D-aminoacyl-tRNA deacylase (Idiomarina loihiensis (strain ATCC BAA-735 / DSM 15497 / L2-TR)).